The sequence spans 417 residues: Ribonucleoside-diphosphate reductase small chain (417 aa).

The Fe cation site is built by Asp168, Glu199, and His202. Residue Tyr206 is part of the active site. Positions 261, 297, and 300 each coordinate Fe cation.

This sequence belongs to the ribonucleoside diphosphate reductase small chain family. Heterotetramer composed of a homodimer of the large subunit (R1) and a homodimer of the small subunit (R2). Larger multisubunit protein complex are also active, composed of (R1)n(R2)n. It depends on Fe cation as a cofactor.

It catalyses the reaction a 2'-deoxyribonucleoside 5'-diphosphate + [thioredoxin]-disulfide + H2O = a ribonucleoside 5'-diphosphate + [thioredoxin]-dithiol. Ribonucleoside-diphosphate reductase holoenzyme provides the precursors necessary for viral DNA synthesis. Allows virus growth in non-dividing cells. Catalyzes the biosynthesis of deoxyribonucleotides from the corresponding ribonucleotides. The polypeptide is Ribonucleoside-diphosphate reductase small chain (RNR2) (Acanthamoeba polyphaga mimivirus (APMV)).